The chain runs to 360 residues: Dual-specificity RNA methyltransferase RlmN (360 aa).

The Proton acceptor role is filled by Glu-89. The 236-residue stretch at Asp-95–Asp-330 folds into the Radical SAM core domain. Cys-102 and Cys-333 are joined by a disulfide. Residues Cys-109, Cys-113, and Cys-116 each contribute to the [4Fe-4S] cluster site. S-adenosyl-L-methionine contacts are provided by residues Gly-159–Glu-160, Ser-191, Ser-213–His-215, and Asn-290. Residue Cys-333 is the S-methylcysteine intermediate of the active site.

This sequence belongs to the radical SAM superfamily. RlmN family. [4Fe-4S] cluster is required as a cofactor.

The protein localises to the cytoplasm. The catalysed reaction is adenosine(2503) in 23S rRNA + 2 reduced [2Fe-2S]-[ferredoxin] + 2 S-adenosyl-L-methionine = 2-methyladenosine(2503) in 23S rRNA + 5'-deoxyadenosine + L-methionine + 2 oxidized [2Fe-2S]-[ferredoxin] + S-adenosyl-L-homocysteine. The enzyme catalyses adenosine(37) in tRNA + 2 reduced [2Fe-2S]-[ferredoxin] + 2 S-adenosyl-L-methionine = 2-methyladenosine(37) in tRNA + 5'-deoxyadenosine + L-methionine + 2 oxidized [2Fe-2S]-[ferredoxin] + S-adenosyl-L-homocysteine. In terms of biological role, specifically methylates position 2 of adenine 2503 in 23S rRNA and position 2 of adenine 37 in tRNAs. m2A2503 modification seems to play a crucial role in the proofreading step occurring at the peptidyl transferase center and thus would serve to optimize ribosomal fidelity. The chain is Dual-specificity RNA methyltransferase RlmN from Alkalilimnicola ehrlichii (strain ATCC BAA-1101 / DSM 17681 / MLHE-1).